We begin with the raw amino-acid sequence, 224 residues long: UPF0758 protein Avin_02940 (224 aa).

The MPN domain occupies 102–224 (ALESPQAVRD…PLSMAEQGWL (123 aa)). 3 residues coordinate Zn(2+): His-173, His-175, and Asp-186. A JAMM motif motif is present at residues 173–186 (HNHPSGIAEPSQAD).

This sequence belongs to the UPF0758 family.

The protein is UPF0758 protein Avin_02940 of Azotobacter vinelandii (strain DJ / ATCC BAA-1303).